The sequence spans 171 residues: Shikimate kinase (171 aa).

G14–T19 serves as a coordination point for ATP. Mg(2+) is bound at residue S18. Residues D36, R60, and G82 each coordinate substrate. R120 lines the ATP pocket. Position 139 (R139) interacts with substrate. Q156 lines the ATP pocket.

It belongs to the shikimate kinase family. As to quaternary structure, monomer. It depends on Mg(2+) as a cofactor.

It is found in the cytoplasm. The enzyme catalyses shikimate + ATP = 3-phosphoshikimate + ADP + H(+). Its pathway is metabolic intermediate biosynthesis; chorismate biosynthesis; chorismate from D-erythrose 4-phosphate and phosphoenolpyruvate: step 5/7. Its function is as follows. Catalyzes the specific phosphorylation of the 3-hydroxyl group of shikimic acid using ATP as a cosubstrate. The polypeptide is Shikimate kinase (Shewanella oneidensis (strain ATCC 700550 / JCM 31522 / CIP 106686 / LMG 19005 / NCIMB 14063 / MR-1)).